A 168-amino-acid chain; its full sequence is uncharacterized protein (168 aa).

One can recognise an N-acetyltransferase domain in the interval 7–168; it reads ERIDTLKTGD…TAKGWPDISM (162 aa).

This is an uncharacterized protein from Azospirillum brasilense.